A 399-amino-acid polypeptide reads, in one-letter code: Proteasome-activating nucleotidase (399 aa).

The stretch at 19-60 (ITYLKRRIRQLELQVRMLEADKERLERELSRLRSEMSRLRQP) forms a coiled coil. Residues 184–189 (GCGKTL) and His323 contribute to the ATP site. Positions 397 to 399 (IYG) are docks into pockets in the proteasome alpha-ring to cause gate opening.

This sequence belongs to the AAA ATPase family. Homohexamer. The hexameric complex has a two-ring architecture resembling a top hat that caps the 20S proteasome core at one or both ends. Upon ATP-binding, the C-terminus of PAN interacts with the alpha-rings of the proteasome core by binding to the intersubunit pockets.

It is found in the cytoplasm. In terms of biological role, ATPase which is responsible for recognizing, binding, unfolding and translocation of substrate proteins into the archaeal 20S proteasome core particle. Is essential for opening the gate of the 20S proteasome via an interaction with its C-terminus, thereby allowing substrate entry and access to the site of proteolysis. Thus, the C-termini of the proteasomal ATPase function like a 'key in a lock' to induce gate opening and therefore regulate proteolysis. Unfolding activity requires energy from ATP hydrolysis, whereas ATP binding alone promotes ATPase-20S proteasome association which triggers gate opening, and supports translocation of unfolded substrates. This is Proteasome-activating nucleotidase from Pyrococcus horikoshii (strain ATCC 700860 / DSM 12428 / JCM 9974 / NBRC 100139 / OT-3).